Here is a 425-residue protein sequence, read N- to C-terminus: Histidine--tRNA ligase (425 aa).

The protein belongs to the class-II aminoacyl-tRNA synthetase family. In terms of assembly, homodimer.

The protein localises to the cytoplasm. It carries out the reaction tRNA(His) + L-histidine + ATP = L-histidyl-tRNA(His) + AMP + diphosphate + H(+). The sequence is that of Histidine--tRNA ligase from Aeromonas hydrophila subsp. hydrophila (strain ATCC 7966 / DSM 30187 / BCRC 13018 / CCUG 14551 / JCM 1027 / KCTC 2358 / NCIMB 9240 / NCTC 8049).